A 312-amino-acid chain; its full sequence is MLEVRSMDMTPKSPEPESETPTRIQPAKPISFSNGIIKRHHHHHHNNNKVTYKECLKNHAAAIGGHALDGCGEFMPSPSSTPSDPTSLKCAACGCHRNFHRRETDDSSAVPPPSLLPSSTTTAAIEYQPHHRHHPPPPLAPPLPRSPNSSSPPPISSSYMLLALSGNNKTAPFSDLNFAAAANHLSATPGSRKRFRTKFSSNQKEKMHEFADRIGWKIQKRDEDEVRDFCREIGVDKGVLKVWMHNNKNSFKFSGGGATTVQRNDNGIGGENSNDDGVRGLANDGDGGGGRFESDSGGADGGGNVNASSSSS.

The interval 1-27 (MLEVRSMDMTPKSPEPESETPTRIQPA) is disordered. S13 bears the Phosphoserine mark. The ZF-HD dimerization-type; degenerate zinc finger occupies 52 to 103 (YKECLKNHAAAIGGHALDGCGEFMPSPSSTPSDPTSLKCAACGCHRNFHRRE). 2 disordered regions span residues 128 to 155 (QPHH…PPPI) and 253 to 312 (FSGG…SSSS). The span at 136-155 (PPPLAPPLPRSPNSSSPPPI) shows a compositional bias: pro residues. The homeobox DNA-binding region spans 192–255 (RKRFRTKFSS…NNKNSFKFSG (64 aa)). Position 273 is a phosphoserine (S273).

Homo- and heterodimer with other ZFHD proteins. Interacts with MIF3; this interaction prevents nuclear localization and DNA-binding to inhibit transcription regulation activity. Binds to ZHD1, ZHD2 and ZHD11. Mostly expressed in flowers, stems and inflorescence and, to a lower extent, in leaves and stems.

Its subcellular location is the nucleus. Putative transcription factor. In Arabidopsis thaliana (Mouse-ear cress), this protein is Zinc-finger homeodomain protein 9 (ZHD9).